An 83-amino-acid chain; its full sequence is Translation initiation factor IF-1 (83 aa).

In terms of domain architecture, S1-like spans Met-1–Leu-72.

This sequence belongs to the IF-1 family. As to quaternary structure, component of the 30S ribosomal translation pre-initiation complex which assembles on the 30S ribosome in the order IF-2 and IF-3, IF-1 and N-formylmethionyl-tRNA(fMet); mRNA recruitment can occur at any time during PIC assembly.

The protein resides in the cytoplasm. Its function is as follows. One of the essential components for the initiation of protein synthesis. Stabilizes the binding of IF-2 and IF-3 on the 30S subunit to which N-formylmethionyl-tRNA(fMet) subsequently binds. Helps modulate mRNA selection, yielding the 30S pre-initiation complex (PIC). Upon addition of the 50S ribosomal subunit IF-1, IF-2 and IF-3 are released leaving the mature 70S translation initiation complex. The sequence is that of Translation initiation factor IF-1 from Verminephrobacter eiseniae (strain EF01-2).